The sequence spans 301 residues: MSNLLSVCDIKDEVLDILELAKNFKEGKMEEKPLAGKSLAMIFQKSSTRTRVSFDVGMYQLGGQALFLSSSELQMGRGEPIPDTAKVLSRFVDGIMIRAIEHDDVVELAKYSDVPVISGLTNLEHPCQALADMLTIQEHLGKLEGKKLCFVGDGNNVCNSLLLMAPLVGMDMSVACPEGYEPNEDIVNMAKKLAEEHNKEITISSDLKVALDNVDVVYTDVWVSMGDEKEAEQRQKDFAPYQVNSNLMSLANDGAIFMHCLPAIRGQEVSGEVIDGPQSVVFDEAENRLHAQKAVLYHFLK.

Residues 47–50, Gln-74, Arg-98, and 125–128 each bind carbamoyl phosphate; these read STRT and HPCQ. Residues Asn-156, Asp-220, and 224–225 each bind L-ornithine; that span reads SM. Carbamoyl phosphate contacts are provided by residues 260-261 and Arg-288; that span reads CL.

It belongs to the aspartate/ornithine carbamoyltransferase superfamily. OTCase family.

It is found in the cytoplasm. The catalysed reaction is carbamoyl phosphate + L-ornithine = L-citrulline + phosphate + H(+). Its pathway is amino-acid biosynthesis; L-arginine biosynthesis; L-arginine from L-ornithine and carbamoyl phosphate: step 1/3. Functionally, reversibly catalyzes the transfer of the carbamoyl group from carbamoyl phosphate (CP) to the N(epsilon) atom of ornithine (ORN) to produce L-citrulline. The polypeptide is Ornithine carbamoyltransferase (Methanobrevibacter smithii (strain ATCC 35061 / DSM 861 / OCM 144 / PS)).